Consider the following 98-residue polypeptide: MNLIDLILIAIYVIGISGLIFNKNNIINILIISELNLGTLGMLFVLASVELNDILGELSGLYILTFTAAESAIGLAIVVILYSKTGIINIRHLNKLKG.

The next 3 membrane-spanning stretches (helical) occupy residues 1-21 (MNLI…GLIF), 26-46 (IINI…LFVL), and 61-81 (LYIL…VVIL).

This sequence belongs to the complex I subunit 4L family.

The protein resides in the mitochondrion membrane. It catalyses the reaction a ubiquinone + NADH + 5 H(+)(in) = a ubiquinol + NAD(+) + 4 H(+)(out). Its function is as follows. Core subunit of the mitochondrial membrane respiratory chain NADH dehydrogenase (Complex I) that is believed to belong to the minimal assembly required for catalysis. Complex I functions in the transfer of electrons from NADH to the respiratory chain. The immediate electron acceptor for the enzyme is believed to be ubiquinone. The sequence is that of NADH-ubiquinone oxidoreductase chain 4L (nad4L) from Dictyostelium discoideum (Social amoeba).